Here is an 89-residue protein sequence, read N- to C-terminus: UPF0367 protein PMM0124 (89 aa).

This sequence belongs to the UPF0367 family.

The sequence is that of UPF0367 protein PMM0124 from Prochlorococcus marinus subsp. pastoris (strain CCMP1986 / NIES-2087 / MED4).